The following is a 484-amino-acid chain: Arginine ADP-riboxanase OspC3 (484 aa).

Residues His-143, Gln-144, Ser-145, Asn-155, Lys-157, Thr-169, Asn-172, and Thr-173 each coordinate NAD(+). Residue Glu-326 is part of the active site. 3 ANK repeats span residues 369-398, 413-444, and 451-480; these read MAHQALAYSLGNKKADIALYLLSKFNFTKQ, NLYDVEYLLSKDGANYKVLEYFINNGLVDVNK, and SGDTMLDNAMKSKDSKMIDFLLKNGAILGK.

Belongs to the OspC family. As to quaternary structure, interacts with host calmodulin (CALM1, CALM2 and/or CALM3); specifically interacts with the apo form of calmodulin, preventing calcium-binding.

The protein localises to the secreted. It is found in the host cytoplasm. It catalyses the reaction L-arginyl-[protein] + NAD(+) = ADP-riboxanated L-argininyl-[protein] + nicotinamide + NH4(+) + H(+). Interaction with host calmodulin (CALM1, CALM2 and/or CALM3) is required to mediate arginine ADP-riboxanation of host caspases. Its function is as follows. ADP-riboxanase effector that inhibits host cell pyroptosis. Acts by mediating arginine ADP-riboxanation of host CASP4/CASP11, blocking CASP4/CASP11 autoprocessing. This prevents CASP4 activation and ability to recognize and cleave GSDMD, thereby inhibiting LPS-induced pyroptosis. ADP-riboxanation takes place in two steps: OspC3 first catalyzes ADP-ribosylation of target Arg, and then initiates a deamination to remove one N-omega group. Independently of its ADP-riboxanase activity, acts as an inhibitor of calcium signaling by inhibiting host calmodulin, preventing activation of the JAK-STAT signaling pathway in response to interferon-beta. Mechanistically, acts by binding to the apo form of calmodulin, preventing calcium-binding and ability to activate host CaMK2 (CAMKII), which is required to stimulate the JAK-STAT signaling pathway in response to interferon-beta. In Shigella flexneri, this protein is Arginine ADP-riboxanase OspC3.